A 482-amino-acid polypeptide reads, in one-letter code: Protein DETOXIFICATION 9 (482 aa).

The next 12 helical transmembrane spans lie at 32-49 (VASMAAPMVAVNMSQYLL), 64-84 (ALAGIALGSSFANVTGFGVLF), 111-131 (FTSIVFLLIISVPISILWMFM), 144-164 (IAELAGVYCLWLVPALFGYSV), 180-200 (PMVLSSLAALSFHVPLCWLMV), 209-229 (GAAASIGISYWLNAVFLWVYM), 261-281 (AMMCCLEWLAFEVITLLSGLL), 289-309 (SVISICLTTSSLHYNLVNGIG), 332-352 (AAAAIIIAAVESVIVSSSLFL), 374-394 (ITPILCISILMDSFLTVLSGI), 403-423 (IGAYVNITSYYVIGIPVGLLL), and 435-455 (WAGLVTGSTLQTLILFLVIGF).

It belongs to the multi antimicrobial extrusion (MATE) (TC 2.A.66.1) family.

It localises to the membrane. The sequence is that of Protein DETOXIFICATION 9 from Arabidopsis thaliana (Mouse-ear cress).